The following is a 557-amino-acid chain: MMNNPRHNIREVRAPRGDKLNARYWTTEAPLRMLMNNLDPDVAENPNELVVYGGIGRAARTWNDFDRIVASLKTLGEDETLLVQSGKPVGVFRTHADAPRVLIANSNLVPHWATWEKFNELDKKGLMMYGQMTAGSWIYIGTQGIVQGTYETFVEAGRQHYGGNLKGKWILTGGLGGMGGAQPLAAVMAGACCLAIECNPDSIDFRLRTRYVDEKAETLDEAMEMIERWTKAGEAKSVGLLGNAAEIVPEMFRRGIRPDMVTDQTSAHDPINGYLPKGWTMAEWREKRVSDPKAVEKAARASMRDHVEAMVAFWNAGVPTLDYGNNIRQVAKDEGFENAFAFPGFVPAYIRPLFCRGIGPFRWAALSGDPEDIYKTDAKVRELTPGNTHLHNWLDMARERISFQGLPARICWVGLGDRHRLGLAFNEMVAKGELKAPVVIGRDHLDSGSVASPNRETEAMKDGSDAVSDWPLLNALLNTASGATWVSLHHGGGVGMGFSQHAGMVIVADGTPDAARRLERVLWNDPATGVMRHADAGYDIAIDCAKEHQLNLPGILG.

Residues glycine 53–glycine 54, glutamine 131, glycine 177–glycine 179, glutamate 197, asparagine 243–alanine 244, glutamine 264–histidine 268, tyrosine 274–leucine 275, and tyrosine 323 contribute to the NAD(+) site. The active site involves cysteine 411. Glycine 493 serves as a coordination point for NAD(+).

The protein belongs to the urocanase family. Requires NAD(+) as cofactor.

Its subcellular location is the cytoplasm. The catalysed reaction is 4-imidazolone-5-propanoate = trans-urocanate + H2O. It participates in amino-acid degradation; L-histidine degradation into L-glutamate; N-formimidoyl-L-glutamate from L-histidine: step 2/3. Catalyzes the conversion of urocanate to 4-imidazolone-5-propionate. The sequence is that of Urocanate hydratase from Mesorhizobium japonicum (strain LMG 29417 / CECT 9101 / MAFF 303099) (Mesorhizobium loti (strain MAFF 303099)).